A 248-amino-acid polypeptide reads, in one-letter code: Granzyme-like protein 2 (248 aa).

Positions 1 to 18 are cleaved as a signal peptide; the sequence is MFLFLIFLVAVLPVNTEG. Residues 19–20 constitute a propeptide, activation peptide; sequence GE. The Peptidase S1 domain maps to 21-243; it reads IVWGTESKPH…FIPWIQKTMK (223 aa). A disulfide bridge connects residues Cys50 and Cys66. Catalysis depends on charge relay system residues His65 and Asp108. 2 disulfide bridges follow: Cys142–Cys207 and Cys172–Cys186. N-linked (GlcNAc...) asparagine glycosylation is found at Asn152 and Asn180. The Charge relay system role is filled by Ser201.

Belongs to the peptidase S1 family. Granzyme subfamily. In terms of tissue distribution, duodenum, lung and spleen.

Functionally, this enzyme is necessary for target cell lysis in cell-mediated immune responses. This chain is Granzyme-like protein 2, found in Rattus norvegicus (Rat).